A 120-amino-acid chain; its full sequence is Ribonuclease P protein component (120 aa).

The protein belongs to the RnpA family. As to quaternary structure, consists of a catalytic RNA component (M1 or rnpB) and a protein subunit.

The catalysed reaction is Endonucleolytic cleavage of RNA, removing 5'-extranucleotides from tRNA precursor.. Functionally, RNaseP catalyzes the removal of the 5'-leader sequence from pre-tRNA to produce the mature 5'-terminus. It can also cleave other RNA substrates such as 4.5S RNA. The protein component plays an auxiliary but essential role in vivo by binding to the 5'-leader sequence and broadening the substrate specificity of the ribozyme. In Mycobacterium marinum (strain ATCC BAA-535 / M), this protein is Ribonuclease P protein component.